The primary structure comprises 291 residues: Proteasome subunit beta (291 aa).

A propeptide spans 1–57 (removed in mature form; by autocatalysis); that stretch reads MTWPLPDRLSINSLSGTPAVDLSSFTDFLRRQAPELLPASISGGAPLAGGDAQLPHG. The active-site Nucleophile is the Thr58.

This sequence belongs to the peptidase T1B family. In terms of assembly, the 20S proteasome core is composed of 14 alpha and 14 beta subunits that assemble into four stacked heptameric rings, resulting in a barrel-shaped structure. The two inner rings, each composed of seven catalytic beta subunits, are sandwiched by two outer rings, each composed of seven alpha subunits. The catalytic chamber with the active sites is on the inside of the barrel. Has a gated structure, the ends of the cylinder being occluded by the N-termini of the alpha-subunits. Is capped by the proteasome-associated ATPase, ARC.

It is found in the cytoplasm. It carries out the reaction Cleavage of peptide bonds with very broad specificity.. It functions in the pathway protein degradation; proteasomal Pup-dependent pathway. With respect to regulation, the formation of the proteasomal ATPase ARC-20S proteasome complex, likely via the docking of the C-termini of ARC into the intersubunit pockets in the alpha-rings, may trigger opening of the gate for substrate entry. Interconversion between the open-gate and close-gate conformations leads to a dynamic regulation of the 20S proteasome proteolysis activity. Component of the proteasome core, a large protease complex with broad specificity involved in protein degradation. This Mycobacterium tuberculosis (strain ATCC 25177 / H37Ra) protein is Proteasome subunit beta.